The following is a 230-amino-acid chain: MAHPTQLGFQDAASPVMEELLHFHDHALMIVFLISTLVLYIIIAMVSTKLTNKYILDSQEIEIVWTILPAVILVLIALPSLRILYLMDEINDPHLTIKAMGHQWYWSYEYTDYENLGFDSYMVPTQDLAPGQFRLLETDHRMVVPMESPVRILVSAEDVLHSWAVPSLGVKMDAVPGRLNQTAFIASRPGVFYGQCSEICGANHSFMPIVVEAVPLEHFENWSSLMLEDA.

Topologically, residues 1-14 are mitochondrial intermembrane; sequence MAHPTQLGFQDAAS. A helical transmembrane segment spans residues 15–45; it reads PVMEELLHFHDHALMIVFLISTLVLYIIIAM. Over 46–59 the chain is Mitochondrial matrix; the sequence is VSTKLTNKYILDSQ. The helical transmembrane segment at 60–87 threads the bilayer; that stretch reads EIEIVWTILPAVILVLIALPSLRILYLM. Over 88-230 the chain is Mitochondrial intermembrane; that stretch reads DEINDPHLTI…NWSSLMLEDA (143 aa). 6 residues coordinate Cu cation: His-161, Cys-196, Glu-198, Cys-200, His-204, and Met-207. Glu-198 is a binding site for Mg(2+).

The protein belongs to the cytochrome c oxidase subunit 2 family. As to quaternary structure, component of the cytochrome c oxidase (complex IV, CIV), a multisubunit enzyme composed of 14 subunits. The complex is composed of a catalytic core of 3 subunits MT-CO1, MT-CO2 and MT-CO3, encoded in the mitochondrial DNA, and 11 supernumerary subunits COX4I, COX5A, COX5B, COX6A, COX6B, COX6C, COX7A, COX7B, COX7C, COX8 and NDUFA4, which are encoded in the nuclear genome. The complex exists as a monomer or a dimer and forms supercomplexes (SCs) in the inner mitochondrial membrane with NADH-ubiquinone oxidoreductase (complex I, CI) and ubiquinol-cytochrome c oxidoreductase (cytochrome b-c1 complex, complex III, CIII), resulting in different assemblies (supercomplex SCI(1)III(2)IV(1) and megacomplex MCI(2)III(2)IV(2)). Found in a complex with TMEM177, COA6, COX18, COX20, SCO1 and SCO2. Interacts with TMEM177 in a COX20-dependent manner. Interacts with COX20. Interacts with COX16. The cofactor is Cu cation.

It is found in the mitochondrion inner membrane. It catalyses the reaction 4 Fe(II)-[cytochrome c] + O2 + 8 H(+)(in) = 4 Fe(III)-[cytochrome c] + 2 H2O + 4 H(+)(out). Its function is as follows. Component of the cytochrome c oxidase, the last enzyme in the mitochondrial electron transport chain which drives oxidative phosphorylation. The respiratory chain contains 3 multisubunit complexes succinate dehydrogenase (complex II, CII), ubiquinol-cytochrome c oxidoreductase (cytochrome b-c1 complex, complex III, CIII) and cytochrome c oxidase (complex IV, CIV), that cooperate to transfer electrons derived from NADH and succinate to molecular oxygen, creating an electrochemical gradient over the inner membrane that drives transmembrane transport and the ATP synthase. Cytochrome c oxidase is the component of the respiratory chain that catalyzes the reduction of oxygen to water. Electrons originating from reduced cytochrome c in the intermembrane space (IMS) are transferred via the dinuclear copper A center (CU(A)) of subunit 2 and heme A of subunit 1 to the active site in subunit 1, a binuclear center (BNC) formed by heme A3 and copper B (CU(B)). The BNC reduces molecular oxygen to 2 water molecules using 4 electrons from cytochrome c in the IMS and 4 protons from the mitochondrial matrix. This chain is Cytochrome c oxidase subunit 2 (mt-co2), found in Carassius auratus (Goldfish).